The following is a 196-amino-acid chain: Peptidyl-tRNA hydrolase (196 aa).

Tyrosine 18 provides a ligand contact to tRNA. Catalysis depends on histidine 23, which acts as the Proton acceptor. Positions 69, 71, and 117 each coordinate tRNA.

This sequence belongs to the PTH family. Monomer.

It localises to the cytoplasm. It catalyses the reaction an N-acyl-L-alpha-aminoacyl-tRNA + H2O = an N-acyl-L-amino acid + a tRNA + H(+). In terms of biological role, hydrolyzes ribosome-free peptidyl-tRNAs (with 1 or more amino acids incorporated), which drop off the ribosome during protein synthesis, or as a result of ribosome stalling. Functionally, catalyzes the release of premature peptidyl moieties from peptidyl-tRNA molecules trapped in stalled 50S ribosomal subunits, and thus maintains levels of free tRNAs and 50S ribosomes. The chain is Peptidyl-tRNA hydrolase from Vibrio vulnificus (strain CMCP6).